An 867-amino-acid chain; its full sequence is Leucine--tRNA ligase (867 aa).

Residues 57 to 67 carry the 'HIGH' region motif; it reads PYPSGTLHMGH. The segment at 308-327 is disordered; that stretch reads SQDERTSDDQPKRGVPTGAV. Positions 309–319 are enriched in basic and acidic residues; that stretch reads QDERTSDDQPK. The 'KMSKS' region motif lies at 631–635; sequence KMSKS. Position 634 (lysine 634) interacts with ATP.

Belongs to the class-I aminoacyl-tRNA synthetase family.

The protein resides in the cytoplasm. The catalysed reaction is tRNA(Leu) + L-leucine + ATP = L-leucyl-tRNA(Leu) + AMP + diphosphate. The chain is Leucine--tRNA ligase from Synechococcus sp. (strain CC9311).